We begin with the raw amino-acid sequence, 284 residues long: RNase adapter protein RapZ (284 aa).

Position 8 to 15 (8 to 15 (GRSGSGKS)) interacts with ATP. Residue 56–59 (DVRN) participates in GTP binding. The interval 266 to 284 (RSRGKNVQSRHRTLEKRKT) is RNA-binding.

This sequence belongs to the RapZ-like family. RapZ subfamily. In terms of assembly, homotrimer.

Functionally, modulates the synthesis of GlmS, by affecting the processing and stability of the regulatory small RNA GlmZ. When glucosamine-6-phosphate (GlcN6P) concentrations are high in the cell, RapZ binds GlmZ and targets it to cleavage by RNase E. Consequently, GlmZ is inactivated and unable to activate GlmS synthesis. Under low GlcN6P concentrations, RapZ is sequestered and inactivated by an other regulatory small RNA, GlmY, preventing GlmZ degradation and leading to synthesis of GlmS. The chain is RNase adapter protein RapZ from Salmonella arizonae (strain ATCC BAA-731 / CDC346-86 / RSK2980).